A 435-amino-acid chain; its full sequence is Mitochondrial association factor 1 form a1 (435 aa).

A signal peptide spans 1–20 (MWRIWRCRLSFLFATGCLLG). The Vacuolar segment spans residues 21–96 (ALTAGLGSQM…VTARRRRNRR (76 aa)). Residues 97-117 (IALIATAVGVAVILAALYVLR) form a helical membrane-spanning segment. The Cytoplasmic portion of the chain corresponds to 118-435 (RRRAQPPQEP…ERTYTFPQGD (318 aa)). A disordered region spans residues 120-159 (RAQPPQEPEPPTRLRTPRPRAPSGQQQPSESEPPAGVPMT).

As to quaternary structure, interacts with host SAMM50.

It localises to the parasitophorous vacuole membrane. Functionally, during host cell infection by tachyzoites, does not play a role in tethering the parasitophorous vacuole to the host mitochondria, probably because it does not bind host mitochondrial import protein TOMM70. The sequence is that of Mitochondrial association factor 1 form a1 from Toxoplasma gondii (strain ATCC 50611 / Me49).